Consider the following 184-residue polypeptide: ATP synthase subunit b, chloroplastic (184 aa).

A helical transmembrane segment spans residues 31 to 53 (LINLSVVLGVLIYFGKGVLSNLL).

The protein belongs to the ATPase B chain family. As to quaternary structure, F-type ATPases have 2 components, F(1) - the catalytic core - and F(0) - the membrane proton channel. F(1) has five subunits: alpha(3), beta(3), gamma(1), delta(1), epsilon(1). F(0) has four main subunits: a(1), b(1), b'(1) and c(10-14). The alpha and beta chains form an alternating ring which encloses part of the gamma chain. F(1) is attached to F(0) by a central stalk formed by the gamma and epsilon chains, while a peripheral stalk is formed by the delta, b and b' chains.

The protein resides in the plastid. It is found in the chloroplast thylakoid membrane. In terms of biological role, f(1)F(0) ATP synthase produces ATP from ADP in the presence of a proton or sodium gradient. F-type ATPases consist of two structural domains, F(1) containing the extramembraneous catalytic core and F(0) containing the membrane proton channel, linked together by a central stalk and a peripheral stalk. During catalysis, ATP synthesis in the catalytic domain of F(1) is coupled via a rotary mechanism of the central stalk subunits to proton translocation. Component of the F(0) channel, it forms part of the peripheral stalk, linking F(1) to F(0). This is ATP synthase subunit b, chloroplastic from Cycas taitungensis (Prince sago).